The following is a 400-amino-acid chain: Elongation factor Tu (400 aa).

The region spanning 10–209 is the tr-type G domain; that stretch reads KPHVNIGTIG…NVDAYIPTPE (200 aa). Residues 19 to 26 form a G1 region; the sequence is GHVDHGKT. GTP is bound at residue 19-26; sequence GHVDHGKT. Residue T26 participates in Mg(2+) binding. The segment at 60-64 is G2; it reads GITIN. A G3 region spans residues 81–84; sequence DCPG. GTP is bound by residues 81 to 85 and 136 to 139; these read DCPGH and NKSD. Residues 136 to 139 are G4; it reads NKSD. The G5 stretch occupies residues 174 to 176; the sequence is SGL.

It belongs to the TRAFAC class translation factor GTPase superfamily. Classic translation factor GTPase family. EF-Tu/EF-1A subfamily. In terms of assembly, monomer.

It localises to the cytoplasm. The enzyme catalyses GTP + H2O = GDP + phosphate + H(+). Its function is as follows. GTP hydrolase that promotes the GTP-dependent binding of aminoacyl-tRNA to the A-site of ribosomes during protein biosynthesis. This chain is Elongation factor Tu, found in Desulforamulus reducens (strain ATCC BAA-1160 / DSM 100696 / MI-1) (Desulfotomaculum reducens).